The sequence spans 597 residues: Elongation factor 4 (597 aa).

One can recognise a tr-type G domain in the interval 2–184 (KHIRNFSIIA…NIVSAIPAPE (183 aa)). Residues 14–19 (DHGKST) and 131–134 (NKID) contribute to the GTP site.

Belongs to the TRAFAC class translation factor GTPase superfamily. Classic translation factor GTPase family. LepA subfamily.

It is found in the cell inner membrane. The catalysed reaction is GTP + H2O = GDP + phosphate + H(+). In terms of biological role, required for accurate and efficient protein synthesis under certain stress conditions. May act as a fidelity factor of the translation reaction, by catalyzing a one-codon backward translocation of tRNAs on improperly translocated ribosomes. Back-translocation proceeds from a post-translocation (POST) complex to a pre-translocation (PRE) complex, thus giving elongation factor G a second chance to translocate the tRNAs correctly. Binds to ribosomes in a GTP-dependent manner. This chain is Elongation factor 4, found in Vibrio parahaemolyticus serotype O3:K6 (strain RIMD 2210633).